Consider the following 458-residue polypeptide: tRNA modification GTPase MnmE (458 aa).

3 residues coordinate (6S)-5-formyl-5,6,7,8-tetrahydrofolate: R26, E88, and R127. The TrmE-type G domain maps to 224–378; it reads GLSTAIIGRP…IEDRINQLFF (155 aa). Residue N234 coordinates K(+). GTP-binding positions include 234 to 239, 253 to 259, and 278 to 281; these read NVGKSS, TDIAGTT, and DTAG. A Mg(2+)-binding site is contributed by S238. Positions 253, 255, and 258 each coordinate K(+). Position 259 (T259) interacts with Mg(2+). K458 is a (6S)-5-formyl-5,6,7,8-tetrahydrofolate binding site.

The protein belongs to the TRAFAC class TrmE-Era-EngA-EngB-Septin-like GTPase superfamily. TrmE GTPase family. As to quaternary structure, homodimer. Heterotetramer of two MnmE and two MnmG subunits. It depends on K(+) as a cofactor.

Its subcellular location is the cytoplasm. In terms of biological role, exhibits a very high intrinsic GTPase hydrolysis rate. Involved in the addition of a carboxymethylaminomethyl (cmnm) group at the wobble position (U34) of certain tRNAs, forming tRNA-cmnm(5)s(2)U34. This Streptococcus pyogenes serotype M12 (strain MGAS9429) protein is tRNA modification GTPase MnmE.